The chain runs to 213 residues: mRNA-decapping protein OPG121 (213 aa).

Glutamate 16 and arginine 50 together coordinate N(7)-methyl-GTP. A Nudix hydrolase domain is found at 30 to 209; sequence KDTHVFAACI…EYLSYIYNML (180 aa). Residues 111 to 132 carry the Nudix box motif; sequence GKLDKKESIKDCLRRELKEESD. Glutamate 126 serves as the catalytic Nucleophile. Mg(2+) is bound by residues glutamate 126 and glutamate 130. Aspartate 151 lines the N(7)-methyl-GTP pocket. Glutamate 183 is a binding site for Mg(2+).

This sequence belongs to the Nudix hydrolase family. Requires Mg(2+) as cofactor. Mn(2+) is required as a cofactor.

The enzyme catalyses a 5'-end (N(7)-methyl 5'-triphosphoguanosine)-guanosine in mRNA + H2O = a 5'-end phospho-guanosine in mRNA + N(7)-methyl-GDP + 2 H(+). In terms of biological role, decapping enzyme that remove the protective 5'-cap from both host and viral mRNAs to commit transcripts for decay by the cellular exonuclease XRN1. Accelerates viral and cellular mRNA turnover to eliminate competing host mRNAs and allow stage-specific synthesis of viral proteins. Acceleration of the turnover of cellular transcripts may even promote the shutoff of host protein synthesis. This is mRNA-decapping protein OPG121 (OPG121) from Vaccinia virus (strain Western Reserve) (VACV).